Reading from the N-terminus, the 581-residue chain is MGTSSCGDHEKQRIEDEEQYGVLLYYKYTSVPDLDELVSFYESSCNSLGLLGRVRLSPKGVNVTVGGKLTALEEHIAAAKSNCLFEGTDFKLASCHHPLNDKVAEECGFTSLSIRVVEELVTFSPCPPLKPPEISNAGKHLSAAEFHSVLQSANGKSENKELVLLDARNLYETRIGKFESENVETLDPEIRQYSDLPTWIDQNAEKMKGKNVLMYCTGGIRCEMASAYIRSKGAGFENTFQLYGGIQRYLEQFPSGGFFKGKNFVFDHRISVGSSKEDIIGSCLLCNNTFDDYSPRCRCRLCRMLVLVCNHCRVKGDIYICELCRKHGKGEVPLSLDPLNQPSESNGDNTRRKLRILCLHGFRQNASSFKGRTGSLAKKLKNIAELVFIDAPHELQFIYQTATPPSGVCNKKFAWLVSSDFDKPSETGWTVAQCQFDPLQYQTQTEGFDKSLTYLKTAFEEKGPFDGILGFSQGAAMAAAVCGKQEQLVGEIDFRFCVLCSGFTPWPLLEMKEKRSIKCPSLHIFGSQPGKDRQIVTQASSDLAGLFEDGCATIVEHDFGHIIPTKSPYIDEIKAFLYQFI.

The Rhodanese domain occupies 158 to 258 (ENKELVLLDA…YLEQFPSGGF (101 aa)). The active-site Cysteine persulfide intermediate is the C216.

The protein is Rhodanese-like domain-containing protein 6 (STR6) of Arabidopsis thaliana (Mouse-ear cress).